Here is a 578-residue protein sequence, read N- to C-terminus: Arginine--tRNA ligase (578 aa).

The 'HIGH' region motif lies at 122–132; the sequence is PNVAKEMHVGH.

The protein belongs to the class-I aminoacyl-tRNA synthetase family. As to quaternary structure, monomer.

Its subcellular location is the cytoplasm. It carries out the reaction tRNA(Arg) + L-arginine + ATP = L-arginyl-tRNA(Arg) + AMP + diphosphate. This Shigella sonnei (strain Ss046) protein is Arginine--tRNA ligase.